Here is a 123-residue protein sequence, read N- to C-terminus: UPF0102 protein VFMJ11_2324 (123 aa).

It belongs to the UPF0102 family.

This is UPF0102 protein VFMJ11_2324 from Aliivibrio fischeri (strain MJ11) (Vibrio fischeri).